Reading from the N-terminus, the 418-residue chain is Protein-lysine 6-oxidase (418 aa).

The first 20 residues, 1–20 (MRFAWTALLGSLQLCALVRC), serve as a signal peptide directing secretion. Residues 21 to 169 (APPAASHRQP…NRVEVDGMVG (149 aa)) constitute a propeptide, removed by BMP1. Residues 63–84 (YQPQRRRDPGATAPGAANATAP) are disordered. Residues 72 to 84 (GATAPGAANATAP) are compositionally biased toward low complexity. 3 N-linked (GlcNAc...) asparagine glycosylation sites follow: Asn80, Asn96, and Asn143. A disordered region spans residues 130 to 175 (TSGAHDAGTSRADNQTAPGEVPTLSNLRPPNRVEVDGMVGDDPYNP). Over residues 140-157 (RADNQTAPGEVPTLSNLR) the composition is skewed to polar residues. A Sulfotyrosine modification is found at Tyr188. Residues 214–418 (PDLVPDPYYI…YASGCTISPY (205 aa)) are lysyl-oxidase like. 5 disulfide bridges follow: Cys239/Cys245, Cys292/Cys341, Cys325/Cys331, Cys352/Cys362, and Cys399/Cys413. 3 residues coordinate Cu cation: His293, His295, and His297. A cross-link (lysine tyrosylquinone (Lys-Tyr)) is located at residues 321-356 (KASFCLEDTSCDYGYHRRFACTAHTQGLSPGCYDTY). A 2',4',5'-topaquinone modification is found at Tyr356.

This sequence belongs to the lysyl oxidase family. In terms of assembly, interacts with MFAP4. Interacts (via propeptide) with EFEMP2; this interaction is strong and facilitates formation of ternary complexes with ELN during elastic fiber assembly; this interaction limits interaction of EFEMP2 with FBLN5. Cu cation is required as a cofactor. Lysine tyrosylquinone residue serves as cofactor. The lysine tyrosylquinone cross-link (LTQ) is generated by condensation of the epsilon-amino group of a lysine with a topaquinone produced by oxidation of tyrosine. Post-translationally, proteolytically cleaved by BMP1 which removes the propeptide. Also proteolytically cleaved by ADAMTS2 and ADAMTS14, but not by ADAMTS3, at an additional cleavage site downstream of the BMP1 cleavage site. The propeptide plays a role in directing the deposition of this enzyme to elastic fibers, via interaction with tropoelastin. Cleavage by BMP1 to remove the propeptide does not increase enzymatic activity but increases binding to collagen. Cleavage by ADAMTS2 produces a form with reduced collagen-binding activity. In terms of processing, sulfated at Tyr-188 and also at either Tyr-184 or Tyr-185 which enhances binding to collagen.

The protein resides in the secreted. The protein localises to the extracellular space. It carries out the reaction L-lysyl-[protein] + O2 + H2O = (S)-2-amino-6-oxohexanoyl-[protein] + H2O2 + NH4(+). In terms of biological role, responsible for the post-translational oxidative deamination of peptidyl lysine residues in precursors to fibrous collagen and elastin. Regulator of Ras expression. May play a role in tumor suppression. Plays a role in the aortic wall architecture. This is Protein-lysine 6-oxidase from Bos taurus (Bovine).